A 249-amino-acid polypeptide reads, in one-letter code: 5'-nucleotidase SurE (249 aa).

Residues D8, D9, S39, and N91 each contribute to the a divalent metal cation site.

It belongs to the SurE nucleotidase family. A divalent metal cation is required as a cofactor.

It is found in the cytoplasm. The enzyme catalyses a ribonucleoside 5'-phosphate + H2O = a ribonucleoside + phosphate. Functionally, nucleotidase that shows phosphatase activity on nucleoside 5'-monophosphates. The polypeptide is 5'-nucleotidase SurE (Pseudomonas putida (strain W619)).